Reading from the N-terminus, the 202-residue chain is Probable nicotinate-nucleotide adenylyltransferase (202 aa).

The protein belongs to the NadD family.

It catalyses the reaction nicotinate beta-D-ribonucleotide + ATP + H(+) = deamido-NAD(+) + diphosphate. The protein operates within cofactor biosynthesis; NAD(+) biosynthesis; deamido-NAD(+) from nicotinate D-ribonucleotide: step 1/1. In terms of biological role, catalyzes the reversible adenylation of nicotinate mononucleotide (NaMN) to nicotinic acid adenine dinucleotide (NaAD). In Clostridium perfringens (strain 13 / Type A), this protein is Probable nicotinate-nucleotide adenylyltransferase.